Consider the following 282-residue polypeptide: ATP synthase gamma chain (282 aa).

The protein belongs to the ATPase gamma chain family. F-type ATPases have 2 components, CF(1) - the catalytic core - and CF(0) - the membrane proton channel. CF(1) has five subunits: alpha(3), beta(3), gamma(1), delta(1), epsilon(1). CF(0) has three main subunits: a, b and c. In this bacterium the a and b subunits are transcribed but do not seem to be translated, thus the ATP synthase consists of the alpha, beta, gamma, delta, epsilon and c subunits.

Its subcellular location is the cell membrane. In terms of biological role, produces ATP from ADP in the presence of a proton gradient across the membrane. The gamma chain is believed to be important in regulating ATPase activity and the flow of protons through the CF(0) complex. The protein is ATP synthase gamma chain of Moorella thermoacetica (strain ATCC 39073 / JCM 9320).